A 255-amino-acid chain; its full sequence is tRNA pseudouridine synthase B (255 aa).

D58 (nucleophile) is an active-site residue.

Belongs to the pseudouridine synthase TruB family. Type 1 subfamily.

It catalyses the reaction uridine(55) in tRNA = pseudouridine(55) in tRNA. In terms of biological role, responsible for synthesis of pseudouridine from uracil-55 in the psi GC loop of transfer RNAs. The protein is tRNA pseudouridine synthase B of Chlorobium chlorochromatii (strain CaD3).